The primary structure comprises 292 residues: Zinc metalloproteinase nas-3 (292 aa).

An N-terminal signal peptide occupies residues 1–16 (MYRFIIFFSLLALTAS). Residues 56–249 (RGIAIHPWQW…RNINTLYKCN (194 aa)) form the Peptidase M12A domain. 2 disulfides stabilise this stretch: cysteine 103-cysteine 248 and cysteine 128-cysteine 158. Histidine 169 provides a ligand contact to Zn(2+). Glutamate 170 is a catalytic residue. Zn(2+) is bound by residues histidine 173 and histidine 179.

The cofactor is Zn(2+).

It is found in the secreted. In terms of biological role, metalloprotease. This chain is Zinc metalloproteinase nas-3 (nas-3), found in Caenorhabditis elegans.